Here is an 835-residue protein sequence, read N- to C-terminus: Involucrin (835 aa).

Residues 1-15 (MSQQHTLPVTLSPAL) are compositionally biased toward polar residues. Disordered regions lie at residues 1–133 (MSQQ…LDQR), 150–206 (EQLL…LEVP), 221–285 (GQLK…QLKH), 321–342 (GQLKHLDQQEGQLELPEQQEGQ), 381–428 (GQLK…VPEE), 446–486 (LDQQ…LEVP), 501–548 (GQLK…VPEE), and 566–809 (LDQQ…QPAL). The span at 76–91 (EQQQQEPQEQELQQQH) shows a compositional bias: low complexity. 2 stretches are compositionally biased toward basic and acidic residues: residues 92–115 (WEQHEEHQKAENPEQQLKQEKAQR) and 159–168 (QEQHLKHLEQ). Residues 169–181 (QEGQLELPEQQEG) show a composition bias toward low complexity. 2 stretches are compositionally biased toward basic and acidic residues: residues 182-198 (QLKHLEQQEGQLKHLEQ) and 222-268 (QLKH…HLDQ). Low complexity-rich tracts occupy residues 269–281 (QEGQLELPEQQEG), 329–341 (QEGQLELPEQQEG), and 389–401 (QEGQLELPEQQEG). Basic and acidic residues-rich tracts occupy residues 402 to 421 (QLKHLEQQEGQLKHLEHQEG) and 446 to 464 (LDQQEGQLKHLDQQEKQLE). Low complexity predominate over residues 509 to 521 (QEGQLELPEQQEG). 3 stretches are compositionally biased toward basic and acidic residues: residues 522–541 (QLKHLEQQEGQLKHLEHQEG), 566–584 (LDQQEGQLKHLDQQEKQLE), and 594–620 (KHLEQQEGQLEHLEGQEGQLEHLEHQE). Residues 655-668 (HLVQQEGQLEQQEG) are compositionally biased toward low complexity. Residues 669-685 (QVEHLEEQVGQLKHLEE) are compositionally biased toward basic and acidic residues. Over residues 693-710 (LEQQQGQLEVPEQQVGQP) the composition is skewed to low complexity. 3 stretches are compositionally biased toward basic and acidic residues: residues 711-721 (KHLEQEEKQLE), 729-738 (QLKHLEKQEA), and 751-775 (KHLEQQEKQLEHPEQKDGQLKHLEQ). Residues 776-789 (QEGQLKNLEQQKGQ) are compositionally biased toward polar residues.

The protein belongs to the involucrin family. In terms of assembly, directly or indirectly cross-linked to cornifelin (CNFN). Substrate of transglutaminase. Specific glutamines or lysines are cross-linked to keratins, desmoplakin and to inter involucrin molecules. In terms of tissue distribution, keratinocytes of epidermis and other stratified squamous epithelia.

It is found in the cytoplasm. Part of the insoluble cornified cell envelope (CE) of stratified squamous epithelia. This chain is Involucrin (IVL), found in Pongo pygmaeus (Bornean orangutan).